The following is a 342-amino-acid chain: Phosphate acyltransferase (342 aa).

This sequence belongs to the PlsX family. As to quaternary structure, homodimer. Probably interacts with PlsY.

Its subcellular location is the cytoplasm. It carries out the reaction a fatty acyl-[ACP] + phosphate = an acyl phosphate + holo-[ACP]. It functions in the pathway lipid metabolism; phospholipid metabolism. Catalyzes the reversible formation of acyl-phosphate (acyl-PO(4)) from acyl-[acyl-carrier-protein] (acyl-ACP). This enzyme utilizes acyl-ACP as fatty acyl donor, but not acyl-CoA. In Shewanella pealeana (strain ATCC 700345 / ANG-SQ1), this protein is Phosphate acyltransferase.